Here is a 202-residue protein sequence, read N- to C-terminus: Orotate phosphoribosyltransferase (202 aa).

5-phospho-alpha-D-ribose 1-diphosphate-binding positions include Lys-93 and 113-121; that span reads EDIITTGGS. Residues Thr-117 and Arg-145 each contribute to the orotate site.

The protein belongs to the purine/pyrimidine phosphoribosyltransferase family. PyrE subfamily. As to quaternary structure, homodimer. The cofactor is Mg(2+).

The enzyme catalyses orotidine 5'-phosphate + diphosphate = orotate + 5-phospho-alpha-D-ribose 1-diphosphate. It functions in the pathway pyrimidine metabolism; UMP biosynthesis via de novo pathway; UMP from orotate: step 1/2. Catalyzes the transfer of a ribosyl phosphate group from 5-phosphoribose 1-diphosphate to orotate, leading to the formation of orotidine monophosphate (OMP). The chain is Orotate phosphoribosyltransferase from Campylobacter concisus (strain 13826).